Consider the following 259-residue polypeptide: MLPLNATIVQINEESPLVRTFFFDFQFETMEPGQFVMVWVRGVDEVPMGLSSKNSITVQKVGEATSKLFELKEGDSFGLRGPFGKGFSLPSEGEKTLIIAGGVGAAPLAPYAEAARSAGSEVHTVLGARSAGDLLFEKRFAEAGKVYISTDDGSKGTKGFVTDVLTDLDLSVYDRIAVCGPEIMISSVFRLLKDRQVLEKSEFSLQRYFKCGIGVCGACCIDKSGLRVCRDGPVFSGVQLLDSELGKYARDASGRRVKI.

Residues 1–89 enclose the FAD-binding FR-type domain; it reads MLPLNATIVQ…RGPFGKGFSL (89 aa). [2Fe-2S] cluster is bound by residues cysteine 211, cysteine 216, cysteine 219, and cysteine 229.

It belongs to the PyrK family. As to quaternary structure, heterotetramer of 2 PyrK and 2 PyrD type B subunits. [2Fe-2S] cluster serves as cofactor. Requires FAD as cofactor.

It functions in the pathway pyrimidine metabolism; UMP biosynthesis via de novo pathway; orotate from (S)-dihydroorotate (NAD(+) route): step 1/1. Responsible for channeling the electrons from the oxidation of dihydroorotate from the FMN redox center in the PyrD type B subunit to the ultimate electron acceptor NAD(+). The chain is Probable dihydroorotate dehydrogenase B (NAD(+)), electron transfer subunit from Methanosarcina barkeri (strain Fusaro / DSM 804).